The chain runs to 364 residues: Histidinol-phosphate aminotransferase (364 aa).

Lysine 222 carries the N6-(pyridoxal phosphate)lysine modification.

The protein belongs to the class-II pyridoxal-phosphate-dependent aminotransferase family. Histidinol-phosphate aminotransferase subfamily. In terms of assembly, homodimer. It depends on pyridoxal 5'-phosphate as a cofactor.

The catalysed reaction is L-histidinol phosphate + 2-oxoglutarate = 3-(imidazol-4-yl)-2-oxopropyl phosphate + L-glutamate. The protein operates within amino-acid biosynthesis; L-histidine biosynthesis; L-histidine from 5-phospho-alpha-D-ribose 1-diphosphate: step 7/9. The protein is Histidinol-phosphate aminotransferase of Brevibacillus brevis (strain 47 / JCM 6285 / NBRC 100599).